Here is a 647-residue protein sequence, read N- to C-terminus: Acetyl-coenzyme A synthetase (647 aa).

CoA is bound by residues 190 to 193 (RGGR), Thr308, and Asn332. ATP is bound by residues 384–386 (GEP), 408–413 (DTWWQT), Asp497, and Arg512. Ser520 lines the CoA pocket. Arg523 contributes to the ATP binding site. The Mg(2+) site is built by Val534, His536, and Val539. CoA is bound at residue Arg581. Lys606 is subject to N6-acetyllysine.

It belongs to the ATP-dependent AMP-binding enzyme family. It depends on Mg(2+) as a cofactor. Post-translationally, acetylated. Deacetylation by the SIR2-homolog deacetylase activates the enzyme.

The catalysed reaction is acetate + ATP + CoA = acetyl-CoA + AMP + diphosphate. In terms of biological role, catalyzes the conversion of acetate into acetyl-CoA (AcCoA), an essential intermediate at the junction of anabolic and catabolic pathways. AcsA undergoes a two-step reaction. In the first half reaction, AcsA combines acetate with ATP to form acetyl-adenylate (AcAMP) intermediate. In the second half reaction, it can then transfer the acetyl group from AcAMP to the sulfhydryl group of CoA, forming the product AcCoA. This chain is Acetyl-coenzyme A synthetase, found in Parvibaculum lavamentivorans (strain DS-1 / DSM 13023 / NCIMB 13966).